We begin with the raw amino-acid sequence, 332 residues long: CMRF35-like molecule 1 (332 aa).

An N-terminal signal peptide occupies residues 1–18 (MHLSLLALFLFWISGCFT). At 19-181 (AQDPVTGPEE…GDGNGFLDLS (163 aa)) the chain is on the extracellular side. The region spanning 22–125 (PVTGPEEVSG…YDHMFKVHVS (104 aa)) is the Ig-like V-type domain. Disulfide bonds link cysteine 41-cysteine 109 and cysteine 55-cysteine 63. Residue asparagine 89 is glycosylated (N-linked (GlcNAc...) asparagine). Residues 182–202 (VLLPVISAALLLLLLVVSLIA) traverse the membrane as a helical segment. Over 203 to 332 (WRMVRRQKKA…EYSSIRRPMP (130 aa)) the chain is Cytoplasmic. Disordered stretches follow at residues 251-270 (PRTS…KDHQ) and 313-332 (PRTN…RPMP).

The protein belongs to the CD300 family. As to quaternary structure, interacts with PTPN6/SHP-1 in a tyrosine phosphorylation dependent manner. Interacts with IL4R. Post-translationally, phosphorylated on tyrosine.

It is found in the cell membrane. Its function is as follows. Acts as an inhibitory receptor for myeloid cells and mast cells. Positively regulates the phagocytosis of apoptotic cells (efferocytosis) via phosphatidylserine (PS) recognition; recognizes and binds PS as a ligand which is expressed on the surface of apoptotic cells. Plays an important role in the maintenance of immune homeostasis, by promoting macrophage-mediated efferocytosis and by inhibiting dendritic cell-mediated efferocytosis. Negatively regulates Fc epsilon receptor-dependent mast cell activation and allergic responses via binding to ceramide and sphingomyelin which act as ligands. May act as a coreceptor for interleukin 4 (IL-4). Associates with and regulates IL-4 receptor alpha-mediated responses by augmenting IL-4- and IL-13-induced signaling. Negatively regulates the Toll-like receptor (TLR) signaling mediated by MYD88 and TRIF through activation of PTPN6/SHP-1 and PTPN11/SHP-2. Inhibits osteoclast formation. Induces macrophage cell death upon engagement. The sequence is that of CMRF35-like molecule 1 (Cd300lf) from Rattus norvegicus (Rat).